A 420-amino-acid chain; its full sequence is Histidine--tRNA ligase (420 aa).

Belongs to the class-II aminoacyl-tRNA synthetase family. Homodimer.

The protein localises to the cytoplasm. It catalyses the reaction tRNA(His) + L-histidine + ATP = L-histidyl-tRNA(His) + AMP + diphosphate + H(+). The sequence is that of Histidine--tRNA ligase from Mycobacterium marinum (strain ATCC BAA-535 / M).